The sequence spans 297 residues: NAD(P)-dependent methylenetetrahydromethanopterin dehydrogenase (297 aa).

To M.extorquens MtdA. Homohexamer.

Its subcellular location is the cytoplasm. It catalyses the reaction 5,10-methylenetetrahydromethanopterin + NAD(+) = 5,10-methenyl-5,6,7,8-tetrahydromethanopterin + NADH. The catalysed reaction is 5,10-methylenetetrahydromethanopterin + NADP(+) = 5,10-methenyl-5,6,7,8-tetrahydromethanopterin + NADPH. It participates in one-carbon metabolism; formaldehyde degradation; formate from formaldehyde (H(4)MPT route): step 2/5. Its function is as follows. Catalyzes the dehydrogenation of methylene-H(4)MPT. This chain is NAD(P)-dependent methylenetetrahydromethanopterin dehydrogenase (mtdB), found in Methylorubrum extorquens (strain ATCC 14718 / DSM 1338 / JCM 2805 / NCIMB 9133 / AM1) (Methylobacterium extorquens).